The following is a 326-amino-acid chain: Phenylalanine--tRNA ligase alpha subunit (326 aa).

Residue glutamate 251 coordinates Mg(2+).

Belongs to the class-II aminoacyl-tRNA synthetase family. Phe-tRNA synthetase alpha subunit type 1 subfamily. Tetramer of two alpha and two beta subunits. Mg(2+) is required as a cofactor.

Its subcellular location is the cytoplasm. It catalyses the reaction tRNA(Phe) + L-phenylalanine + ATP = L-phenylalanyl-tRNA(Phe) + AMP + diphosphate + H(+). The chain is Phenylalanine--tRNA ligase alpha subunit from Pseudoalteromonas atlantica (strain T6c / ATCC BAA-1087).